The primary structure comprises 73 residues: Accessory secretory protein Asp5 (73 aa).

An N-terminal signal peptide occupies residues 1–30 (MQKLLLILTILLALILITLVISLPRENQQF). Residues 52–72 (IILLIVSILLFLTLIFYMIQT) form a helical membrane-spanning segment.

In terms of assembly, part of the accessory SecA2/SecY2 protein translocation apparatus required to export cell wall protein GspB.

The protein resides in the cell membrane. Its function is as follows. Part of the accessory SecA2/SecY2 system specifically required to export GspB, a serine-rich repeat cell wall protein encoded upstream in the same operon. The protein is Accessory secretory protein Asp5 (asp5) of Streptococcus gordonii.